Consider the following 343-residue polypeptide: Ribonucleoside-diphosphate reductase small subunit (343 aa).

The Fe cation site is built by D101, E131, and H134. Y138 is a catalytic residue. The helical transmembrane segment at I188–L208 threads the bilayer. Fe cation contacts are provided by E194, E228, and H231.

It belongs to the ribonucleoside diphosphate reductase small chain family. As to quaternary structure, heterotetramer composed of a homodimer of the large subunit (R1) and a homodimer of the small subunit (R2). Larger multisubunit protein complex are also active, composed of (R1)n(R2)n. Fe cation is required as a cofactor.

The protein localises to the host membrane. It carries out the reaction a 2'-deoxyribonucleoside 5'-diphosphate + [thioredoxin]-disulfide + H2O = a ribonucleoside 5'-diphosphate + [thioredoxin]-dithiol. Functionally, ribonucleoside-diphosphate reductase holoenzyme provides the precursors necessary for viral DNA synthesis. Allows virus growth in non-dividing cells, as well as reactivation from latency in infected hosts. Catalyzes the biosynthesis of deoxyribonucleotides from the corresponding ribonucleotides. The chain is Ribonucleoside-diphosphate reductase small subunit from Gallid herpesvirus 2 (strain Chicken/Md5/ATCC VR-987) (GaHV-2).